Reading from the N-terminus, the 244-residue chain is Complement C1q subcomponent subunit A (244 aa).

A signal peptide spans 1-22 (MEAPRGWLVISVLAISLASSVT). Residues 28–94 (APDGTHGSAG…PGPSGPMGPA (67 aa)) are disordered. Residues 31–109 (GTHGSAGIPG…KGTKGSPGNI (79 aa)) form the Collagen-like domain. P39 and P45 each carry 4-hydroxyproline. K48 is subject to 5-hydroxylysine. K48 carries an O-linked (Gal...) hydroxylysine glycan. Residues P54 and P57 each carry the 4-hydroxyproline modification. K67 carries the post-translational modification 5-hydroxylysine. K67 carries O-linked (Gal...) hydroxylysine glycosylation. A 4-hydroxyproline mark is found at P73, P79, and P85. The span at 79–94 (PGRMGYPGPSGPMGPA) shows a compositional bias: low complexity. K100 bears the 5-hydroxylysine mark. The O-linked (Gal...) hydroxylysine glycan is linked to K100. The region spanning 110–244 (KDQPRPAFSA…FSGFLIFPSA (135 aa)) is the C1q domain. N146 carries an N-linked (GlcNAc...) asparagine glycan. An intrachain disulfide couples C172 to C189. Q198 contacts Ca(2+).

In terms of assembly, core component of the complement C1 complex, a calcium-dependent complex composed of 1 molecule of the C1Q subcomplex, 2 molecules of C1R and 2 molecules of C1S. The C1Q subcomplex is composed 18 subunits: 3 chains of C1QA, C1QB, and C1QC trimerize to form 6 collagen-like triple helices connected to six globular ligand-recognition modules (C1q domain). Interacts with CR1 (via Sushi 24 and Sushi 25 domains). Interacts (via C-terminus) with CD33; this interaction activates CD33 inhibitory motifs. O-linked glycans are assumed to be the Glc-Gal disaccharides typically found as secondary modifications of hydroxylated lysines in collagen-like domains.

It localises to the secreted. The protein resides in the cell surface. Its activity is regulated as follows. The C1Q subcomplex is inhibited by sulfated molecules, such as triterpenoid sulfates, heparan sulfate, or chondroitin sulfates. Functionally, core component of the complement C1 complex, a multiprotein complex that initiates the classical pathway of the complement system, a cascade of proteins that leads to phagocytosis and breakdown of pathogens and signaling that strengthens the adaptive immune system. The classical complement pathway is initiated by the C1Q subcomplex of the C1 complex, which specifically binds IgG or IgM immunoglobulins complexed with antigens, forming antigen-antibody complexes on the surface of pathogens: C1QA, together with C1QB and C1QC, specifically recognizes and binds the Fc regions of IgG or IgM via its C1q domain. Immunoglobulin-binding activates the proenzyme C1R, which cleaves C1S, initiating the proteolytic cascade of the complement system. The C1Q subcomplex is activated by a hexamer of IgG complexed with antigens, while it is activated by a pentameric IgM. The C1Q subcomplex also recognizes and binds phosphatidylserine exposed on the surface of cells undergoing programmed cell death, possibly promoting activation of the complement system. In Bos taurus (Bovine), this protein is Complement C1q subcomponent subunit A (C1QA).